Reading from the N-terminus, the 494-residue chain is Acetyl-coenzyme A carboxylase carboxyl transferase subunit beta, chloroplastic (494 aa).

A CoA carboxyltransferase N-terminal domain is found at 230-494; it reads LWVQCENCYG…LHGFFPLNQN (265 aa). Residues C234, C237, C253, and C256 each contribute to the Zn(2+) site. Residues 234–256 form a C4-type zinc finger; it reads CENCYGLNYKKFFRSKMNICEQC.

It belongs to the AccD/PCCB family. In terms of assembly, acetyl-CoA carboxylase is a heterohexamer composed of biotin carboxyl carrier protein, biotin carboxylase and 2 subunits each of ACCase subunit alpha and ACCase plastid-coded subunit beta (accD). The cofactor is Zn(2+).

The protein resides in the plastid. The protein localises to the chloroplast stroma. It carries out the reaction N(6)-carboxybiotinyl-L-lysyl-[protein] + acetyl-CoA = N(6)-biotinyl-L-lysyl-[protein] + malonyl-CoA. Its pathway is lipid metabolism; malonyl-CoA biosynthesis; malonyl-CoA from acetyl-CoA: step 1/1. Component of the acetyl coenzyme A carboxylase (ACC) complex. Biotin carboxylase (BC) catalyzes the carboxylation of biotin on its carrier protein (BCCP) and then the CO(2) group is transferred by the transcarboxylase to acetyl-CoA to form malonyl-CoA. The chain is Acetyl-coenzyme A carboxylase carboxyl transferase subunit beta, chloroplastic from Drimys granadensis.